The primary structure comprises 121 residues: uncharacterized protein (121 aa).

To M.jannaschii MJ0017 and MJ1466.

This is an uncharacterized protein from Aquifex aeolicus (strain VF5).